A 378-amino-acid polypeptide reads, in one-letter code: Putative F-box protein At3g24580 (378 aa).

Positions 1-47 (MTKMSNLPNDLAEEVLSRVSLTSLRNVRLTCKDWNTLSKGESFAKNH) constitute an F-box domain.

This chain is Putative F-box protein At3g24580, found in Arabidopsis thaliana (Mouse-ear cress).